The following is a 285-amino-acid chain: Orotidine 5'-phosphate decarboxylase (285 aa).

Substrate-binding positions include Asp-40, Lys-62–His-64, Asp-93–Thr-102, Tyr-235, and Arg-253. The Proton donor role is filled by Lys-95.

This sequence belongs to the OMP decarboxylase family.

It catalyses the reaction orotidine 5'-phosphate + H(+) = UMP + CO2. It functions in the pathway pyrimidine metabolism; UMP biosynthesis via de novo pathway; UMP from orotate: step 2/2. The chain is Orotidine 5'-phosphate decarboxylase (URA3) from Paracoccidioides brasiliensis.